The following is a 719-amino-acid chain: Probable phosphatidylinositol phosphate kinase DDB_G0267588 (719 aa).

The segment at 47 to 261 is disordered; sequence VFSPIPPPPS…SDSPNRVRLN (215 aa). Low complexity-rich tracts occupy residues 57-77 and 87-104; these read TTDN…TDNT and IENN…PNSI. Over residues 107–129 the composition is skewed to basic and acidic residues; that stretch reads ANKKDSIELEEDKEHSIKRKDGS. Positions 172 to 184 are enriched in polar residues; it reads FDATNDNHNPQEV. Positions 199–217 are enriched in low complexity; that stretch reads TTTTTTTTTTTTSTNSTSN. 2 stretches are compositionally biased toward polar residues: residues 218-228 and 248-261; these read KLPNNGDNTVS and ASGS…VRLN. Phosphothreonine is present on threonine 262. The region spanning 316–718 is the PIPK domain; the sequence is NAVGKSMGTE…RFQEFLSTII (403 aa). A disordered region spans residues 579–638; it reads RENEPPSPSLLRSTLEDSSDFESPSMEQSSAGQQQQQRGSGNYDNSGAGRDSTTGGAAPK. A compositionally biased stretch (low complexity) spans 606–619; sequence QSSAGQQQQQRGSG.

In terms of processing, phosphorylated at Thr-262 by pkgB.

Functionally, may be involved in signaling events that underlie chemotaxis via the chemoattractant-mediated pkgB phosphorylation. The protein is Probable phosphatidylinositol phosphate kinase DDB_G0267588 of Dictyostelium discoideum (Social amoeba).